A 160-amino-acid polypeptide reads, in one-letter code: Sec-independent protein translocase protein TatB (160 aa).

A helical transmembrane segment spans residues 1–21 (MFGMGFFEILVVLIVAIIFLG). The segment at 118-160 (HLNEEVSNEEALNKEVSSDESPKEVQLTTDNNAKEHDKEKEHV) is disordered. Composition is skewed to basic and acidic residues over residues 128–140 (ALNK…ESPK) and 149–160 (NAKEHDKEKEHV).

The protein belongs to the TatB family. As to quaternary structure, the Tat system comprises two distinct complexes: a TatABC complex, containing multiple copies of TatA, TatB and TatC subunits, and a separate TatA complex, containing only TatA subunits. Substrates initially bind to the TatABC complex, which probably triggers association of the separate TatA complex to form the active translocon.

The protein resides in the cell inner membrane. In terms of biological role, part of the twin-arginine translocation (Tat) system that transports large folded proteins containing a characteristic twin-arginine motif in their signal peptide across membranes. Together with TatC, TatB is part of a receptor directly interacting with Tat signal peptides. TatB may form an oligomeric binding site that transiently accommodates folded Tat precursor proteins before their translocation. In Helicobacter pylori (strain J99 / ATCC 700824) (Campylobacter pylori J99), this protein is Sec-independent protein translocase protein TatB.